Consider the following 249-residue polypeptide: U2 small nuclear ribonucleoprotein A' (249 aa).

LRR repeat units lie at residues 20-41, 43-64, 65-87, and 89-110; these read KERE…GATE, QFDT…PYLN, RLGT…GEFL, and KLHS…DPLA. The region spanning 123–161 is the LRRCT domain; that stretch reads NNITKKANYRLYVIHKLKSLRVLDFIKIKAKERAEAASL.

The protein belongs to the U2 small nuclear ribonucleoprotein A family.

The protein resides in the nucleus. It is found in the nucleus speckle. Functionally, this protein is associated with sn-RNP U2. It helps the A' protein to bind stem loop IV of U2 snRNA. This Arabidopsis thaliana (Mouse-ear cress) protein is U2 small nuclear ribonucleoprotein A'.